Here is a 389-residue protein sequence, read N- to C-terminus: Succinate--CoA ligase [ADP-forming] subunit beta (389 aa).

Residues 9–236 form the ATP-grasp domain; it reads KELFAKHNVP…KDATDPLELK (228 aa). Residues Lys45, 52 to 54, Ser94, and Glu99 each bind ATP; that span reads GRG. Residues Asn191 and Asp205 each contribute to the Mg(2+) site. Residues Asn256 and 318–320 contribute to the substrate site; that span reads GIT.

It belongs to the succinate/malate CoA ligase beta subunit family. As to quaternary structure, heterotetramer of two alpha and two beta subunits. Mg(2+) is required as a cofactor.

The enzyme catalyses succinate + ATP + CoA = succinyl-CoA + ADP + phosphate. It carries out the reaction GTP + succinate + CoA = succinyl-CoA + GDP + phosphate. Its pathway is carbohydrate metabolism; tricarboxylic acid cycle; succinate from succinyl-CoA (ligase route): step 1/1. Its function is as follows. Succinyl-CoA synthetase functions in the citric acid cycle (TCA), coupling the hydrolysis of succinyl-CoA to the synthesis of either ATP or GTP and thus represents the only step of substrate-level phosphorylation in the TCA. The beta subunit provides nucleotide specificity of the enzyme and binds the substrate succinate, while the binding sites for coenzyme A and phosphate are found in the alpha subunit. In Mycobacteroides abscessus (strain ATCC 19977 / DSM 44196 / CCUG 20993 / CIP 104536 / JCM 13569 / NCTC 13031 / TMC 1543 / L948) (Mycobacterium abscessus), this protein is Succinate--CoA ligase [ADP-forming] subunit beta.